The primary structure comprises 930 residues: Type I restriction enzyme SsaAORF53P endonuclease subunit (930 aa).

The region spanning 254 to 418 (HQATETSNNG…DGRSTADIFG (165 aa)) is the Helicase ATP-binding domain. Residue 268–274 (TTGSGKT) participates in ATP binding.

The protein belongs to the HsdR family. The type I restriction/modification system is composed of three polypeptides R, M and S.

The catalysed reaction is Endonucleolytic cleavage of DNA to give random double-stranded fragments with terminal 5'-phosphates, ATP is simultaneously hydrolyzed.. Its function is as follows. The restriction (R) subunit of a type I restriction enzyme that recognizes an undetermined sequence and cleaves a random distance away. Subunit R is required for both nuclease and ATPase activities, but not for modification. After locating a non-methylated recognition site, the enzyme complex serves as a molecular motor that translocates DNA in an ATP-dependent manner until a collision occurs that triggers cleavage. In Staphylococcus saprophyticus subsp. saprophyticus (strain ATCC 15305 / DSM 20229 / NCIMB 8711 / NCTC 7292 / S-41), this protein is Type I restriction enzyme SsaAORF53P endonuclease subunit.